The sequence spans 1849 residues: Protein virilizer (1849 aa).

Composition is skewed to basic and acidic residues over residues 206–219, 242–265, 281–291, 332–347, and 785–818; these read QHYHQHVDEEQREM, THSESNEREYIRCSRDKGSRDWSR, RSRSDADEHKW, HSSESLHRDRDDEERS, and VEAKPEGKEDKPMDDSVEQKPDEGKAAGIRAAEE. 6 disordered regions span residues 206 to 364, 783 to 818, 1557 to 1584, 1666 to 1686, 1715 to 1782, and 1798 to 1849; these read QHYH…DEII, RVVEAKPEGKEDKPMDDSVEQKPDEGKAAGIRAAEE, SASMETPAVETENDGANPAASCSTSSSG, GESKRTLNLSGSPQSNREMTP, RGRG…NRGS, and IGSP…PYLR. Positions 1671 to 1684 are enriched in polar residues; sequence TLNLSGSPQSNREM. Over residues 1732–1742 the composition is skewed to low complexity; sequence SRPPNTSRPPS. A compositionally biased stretch (polar residues) spans 1800–1818; that stretch reads SPSSWTESGGGSYRSTSES.

It belongs to the vir family. Component of the WMM complex, a N6-methyltransferase complex composed of a catalytic subcomplex, named MAC, and of an associated subcomplex, named MACOM. The MAC subcomplex is composed of Ime4/Mettl3 and Mettl14. The MACOM subcomplex is composed of fl(2)d, Flacc/Xio, Hakai, vir, and, in some cases of nito. Part of a complex containing fl(2)d, Sxl and vir.

It is found in the nucleus. Functionally, associated component of the WMM complex, a complex that mediates N6-methyladenosine (m6A) methylation of mRNAs, a modification that plays a role in the efficiency of mRNA splicing and is required for sex determination. Required for sex determination and dosage compensation via Sxl alternative splicing: m6A methylation acts as a key regulator of Sxl pre-mRNA and promotes female-specific alternative splicing of Sxl, which determines female physiognomy. M6A methylation is also required for neuronal functions. Required for proper inclusion of regulated exons in Ubx transcripts, leading to isoforms Ia/b and IIa/b. In Drosophila pseudoobscura pseudoobscura (Fruit fly), this protein is Protein virilizer (vir).